Reading from the N-terminus, the 234-residue chain is MLTYETWEENDVSFSEEDETKGALSVLSWAYKEYKSEIVYACSFGVEGMVLLHLINQVNPSAKVVFLDTNVHFQETYELIQKVRERFPSLNIIEKQPKLTLDEQDKLHGDKLWESNPNLCCKIRKILPLEESLANEKAWISGLRREQSETRKHTKFINQDHRFQSIKVCPLIHWTWKEVWRYVYKHSLPYNPLHDVGYPSIGCEKCTLPVGEGGDSRDGRWAGKVKTECGLHYQ.

4 residues coordinate [4Fe-4S] cluster: cysteine 120, cysteine 121, cysteine 203, and cysteine 206. The active-site Nucleophile; cysteine thiosulfonate intermediate is the cysteine 229.

It belongs to the PAPS reductase family. CysH subfamily. [4Fe-4S] cluster serves as cofactor.

It localises to the cytoplasm. It catalyses the reaction [thioredoxin]-disulfide + sulfite + AMP + 2 H(+) = adenosine 5'-phosphosulfate + [thioredoxin]-dithiol. Its pathway is sulfur metabolism; hydrogen sulfide biosynthesis; sulfite from sulfate. Its function is as follows. Catalyzes the formation of sulfite from adenosine 5'-phosphosulfate (APS) using thioredoxin as an electron donor. The sequence is that of Adenosine 5'-phosphosulfate reductase from Bacillus thuringiensis (strain Al Hakam).